A 381-amino-acid polypeptide reads, in one-letter code: Fatty acid elongase 6 (381 aa).

Helical transmembrane passes span 10-30 (IAAA…LVYS), 69-89 (LPYL…SLIV), 107-127 (GLVH…GLMI), 153-173 (LIWL…IMLL), 182-202 (FLHV…LLVA), 216-236 (GVHV…SGIV), and 280-300 (LLQI…NFLV). Positions 184–188 (HVYHH) match the HxxHH motif motif. Catalysis depends on H187, which acts as the Nucleophile. Residues 362-381 (RKNGNGNGQKASLQAMAGSR) form a disordered region.

Belongs to the ELO family.

The protein localises to the membrane. Its pathway is lipid metabolism; polyunsaturated fatty acid biosynthesis. Functionally, involved in the synthesis of fatty acids. Elongates C18 polyunsaturated fatty acids (PUFAs) with a preference for Delta6 PUFAs. The chain is Fatty acid elongase 6 from Leishmania major.